Consider the following 253-residue polypeptide: Ubiquinone/menaquinone biosynthesis C-methyltransferase UbiE (253 aa).

S-adenosyl-L-methionine contacts are provided by residues Thr76, Asp97, and 125 to 126; that span reads NA.

It belongs to the class I-like SAM-binding methyltransferase superfamily. MenG/UbiE family.

The enzyme catalyses a 2-demethylmenaquinol + S-adenosyl-L-methionine = a menaquinol + S-adenosyl-L-homocysteine + H(+). The catalysed reaction is a 2-methoxy-6-(all-trans-polyprenyl)benzene-1,4-diol + S-adenosyl-L-methionine = a 5-methoxy-2-methyl-3-(all-trans-polyprenyl)benzene-1,4-diol + S-adenosyl-L-homocysteine + H(+). Its pathway is quinol/quinone metabolism; menaquinone biosynthesis; menaquinol from 1,4-dihydroxy-2-naphthoate: step 2/2. The protein operates within cofactor biosynthesis; ubiquinone biosynthesis. Functionally, methyltransferase required for the conversion of demethylmenaquinol (DMKH2) to menaquinol (MKH2) and the conversion of 2-polyprenyl-6-methoxy-1,4-benzoquinol (DDMQH2) to 2-polyprenyl-3-methyl-6-methoxy-1,4-benzoquinol (DMQH2). This Nitrobacter hamburgensis (strain DSM 10229 / NCIMB 13809 / X14) protein is Ubiquinone/menaquinone biosynthesis C-methyltransferase UbiE.